The chain runs to 129 residues: NADPH-dependent 7-cyano-7-deazaguanine reductase (129 aa).

C34 acts as the Thioimide intermediate in catalysis. D41 acts as the Proton donor in catalysis. Residues 56-58 (VEL) and 75-76 (HE) contribute to the substrate site.

Belongs to the GTP cyclohydrolase I family. QueF type 1 subfamily.

It localises to the cytoplasm. The enzyme catalyses 7-aminomethyl-7-carbaguanine + 2 NADP(+) = 7-cyano-7-deazaguanine + 2 NADPH + 3 H(+). It functions in the pathway tRNA modification; tRNA-queuosine biosynthesis. Catalyzes the NADPH-dependent reduction of 7-cyano-7-deazaguanine (preQ0) to 7-aminomethyl-7-deazaguanine (preQ1). The protein is NADPH-dependent 7-cyano-7-deazaguanine reductase of Alkalilimnicola ehrlichii (strain ATCC BAA-1101 / DSM 17681 / MLHE-1).